The sequence spans 239 residues: U2 small nuclear ribonucleoprotein A' (239 aa).

LRR repeat units follow at residues 19 to 40, 42 to 63, 64 to 85, and 88 to 109; these read KETE…GVLR, VHDA…PRMK, RLQT…IGKV, and NLKT…DPLA. The LRRCT domain maps to 122–160; that stretch reads NPVAQKQYYRLYLIWRIPSLHILDFERVRRNERLRAEEV.

The protein belongs to the U2 small nuclear ribonucleoprotein A family. As to quaternary structure, belongs to the 40S cdc5-associated complex (or cwf complex), a spliceosome sub-complex reminiscent of a late-stage spliceosome composed of the U2, U5 and U6 snRNAs and at least brr2, cdc5, cwf2/prp3, cwf3/syf1, cwf4/syf3, cwf5/ecm2, spp42/cwf6, cwf7/spf27, cwf8, cwf9, cwf10, cwf11, cwf12, prp45/cwf13, cwf14, cwf15, cwf16, cwf17, cwf18, cwf19, cwf20, cwf21, cwf22, cwf23, cwf24, cwf25, cwf26, cyp7/cwf27, cwf28, cwf29/ist3, lea1, msl1, prp5/cwf1, prp10, prp12/sap130, prp17, prp22, sap61, sap62, sap114, sap145, slu7, smb1, smd1, smd3, smf1, smg1 and syf2.

The protein resides in the nucleus. Its function is as follows. Involved in pre-mRNA splicing. This protein is associated with sn-RNP U2. It helps the A' protein to bind stem loop IV of U2 snRNA. The polypeptide is U2 small nuclear ribonucleoprotein A' (lea1) (Schizosaccharomyces pombe (strain 972 / ATCC 24843) (Fission yeast)).